A 327-amino-acid polypeptide reads, in one-letter code: MKFVDSARIVVKAGDGGNGCVSFRREKYVPKGGPDGGDGGRGGHVYLRANSQLATLLDFRYKKNYEALRGVHGQGSKKAGKTGKDIVINVPCGTLVKNSVSGEVICDLVEDGEEFLLARGGDGGRGNPHFTTSTRQAPRYAEPGGKGEELKVDLELKLMADVGLVGFPNAGKSTLISVLSAARPKIADYPFTTLVPNLGIVQYGEYKSFVMADIPGIIEGAAEGKGLGIQFLRHIERTKVLAVLVSGDGEDPVGEYRLLLGEMERFDPALLQKPRIIVVTKMDVVDEAFSLPDFEDDVPLIPVSSITRSGLEELRNALWNTINPSIP.

One can recognise an Obg domain in the interval 1-159; the sequence is MKFVDSARIV…LKVDLELKLM (159 aa). Residues 120–145 are disordered; the sequence is GGDGGRGNPHFTTSTRQAPRYAEPGG. In terms of domain architecture, OBG-type G spans 160-323; sequence ADVGLVGFPN…LRNALWNTIN (164 aa). Residues 166 to 173, 191 to 195, 213 to 216, 280 to 283, and 304 to 306 each bind GTP; these read GFPNAGKS, FTTLV, DIPG, TKMD, and SSI. 2 residues coordinate Mg(2+): S173 and T193.

Belongs to the TRAFAC class OBG-HflX-like GTPase superfamily. OBG GTPase family. As to quaternary structure, monomer. The cofactor is Mg(2+).

The protein localises to the cytoplasm. An essential GTPase which binds GTP, GDP and possibly (p)ppGpp with moderate affinity, with high nucleotide exchange rates and a fairly low GTP hydrolysis rate. Plays a role in control of the cell cycle, stress response, ribosome biogenesis and in those bacteria that undergo differentiation, in morphogenesis control. This Prosthecochloris aestuarii (strain DSM 271 / SK 413) protein is GTPase Obg.